A 127-amino-acid chain; its full sequence is Small ribosomal subunit protein uS12m (127 aa).

The protein belongs to the universal ribosomal protein uS12 family.

Its subcellular location is the mitochondrion. Protein S12 is involved in the translation initiation step. In Chondrus crispus (Carrageen Irish moss), this protein is Small ribosomal subunit protein uS12m (RPS12).